Here is a 110-residue protein sequence, read N- to C-terminus: PCNA-associated factor (110 aa).

A Glycyl lysine isopeptide (Lys-Gly) (interchain with G-Cter in ubiquitin) cross-link involves residue K15. The D-box motif lies at 23–34; that stretch reads RKVLGSSTFVTN. Residue K24 is modified to N6-acetyllysine; alternate. K24 is covalently cross-linked (Glycyl lysine isopeptide (Lys-Gly) (interchain with G-Cter in ubiquitin); alternate). Residue S28 is modified to Phosphoserine. The span at 29–39 shows a compositional bias: low complexity; the sequence is STFVTNSSGSS. Residues 29–110 form a disordered region; it reads STFVTNSSGS…QPDHRDDENE (82 aa). The PIP-box motif lies at 61 to 71; the sequence is QKGIGEFFRLS. S71 bears the Phosphoserine mark. The segment covering 71–80 has biased composition (basic and acidic residues); that stretch reads SPKDSKKENQ. The short motif at 77 to 79 is the KEN box element; the sequence is KEN. The short motif at 84–96 is the Initiation motif element; it reads EAGSSGLGKAKRK.

Interacts (when monoubiquitinated at Lys-15 and Lys-24) with PCNA. Interacts with isoform 2/p33ING1b of ING1. Interacts with BRCA1. In terms of processing, monoubiquitinated at Lys-15 and Lys-24 during normal S phase, promoting its association with PCNA. Also diubiquitinated at these 2 sites. Following DNA damage, monoubiquitin chains at Lys-15 and Lys-24 are probably extended, leading to disrupt the interaction with PCNA. Polyubiquitinated by the APC/C complex at the mitotic exit, leading to its degradation by the proteasome.

The protein resides in the nucleus. It is found in the cytoplasm. It localises to the perinuclear region. Functionally, PCNA-binding protein that acts as a regulator of DNA repair during DNA replication. Following DNA damage, the interaction with PCNA is disrupted, facilitating the interaction between monoubiquitinated PCNA and the translesion DNA synthesis DNA polymerase eta (POLH) at stalled replisomes, facilitating the bypass of replication-fork-blocking lesions. Also acts as a regulator of centrosome number. The polypeptide is PCNA-associated factor (Rattus norvegicus (Rat)).